The sequence spans 186 residues: Adenine phosphoribosyltransferase (186 aa).

Position 132–136 (132–136 (ATGGS)) interacts with AMP.

The protein belongs to the purine/pyrimidine phosphoribosyltransferase family. As to quaternary structure, homodimer. The cofactor is Mg(2+).

The protein localises to the cytoplasm. The protein resides in the nucleus. The catalysed reaction is AMP + diphosphate = 5-phospho-alpha-D-ribose 1-diphosphate + adenine. The protein operates within purine metabolism; AMP biosynthesis via salvage pathway; AMP from adenine: step 1/1. Catalyzes a salvage reaction resulting in the formation of AMP, that is energically less costly than de novo synthesis. The protein is Adenine phosphoribosyltransferase (APT1) of Debaryomyces hansenii (strain ATCC 36239 / CBS 767 / BCRC 21394 / JCM 1990 / NBRC 0083 / IGC 2968) (Yeast).